The following is a 266-amino-acid chain: Undecaprenyl-diphosphatase (266 aa).

8 helical membrane passes run 1–21, 39–59, 86–106, 117–137, 153–173, 190–210, 216–236, and 246–266; these read MDFL…FIPV, PGSS…FWYF, SIFI…LFVT, FSIA…DIST, FIGI…GATI, SFLL…ITSI, FPFL…LLAI, and NGLK…ILNL.

This sequence belongs to the UppP family.

It localises to the cell inner membrane. It catalyses the reaction di-trans,octa-cis-undecaprenyl diphosphate + H2O = di-trans,octa-cis-undecaprenyl phosphate + phosphate + H(+). Catalyzes the dephosphorylation of undecaprenyl diphosphate (UPP). Confers resistance to bacitracin. The chain is Undecaprenyl-diphosphatase from Prochlorococcus marinus (strain MIT 9515).